The sequence spans 217 residues: Somatotropin (217 aa).

The signal sequence occupies residues 1–26; it reads MMAAGPRTSLLLAFALLCLPWTQVVG. Zn(2+) is bound at residue H46. A disulfide bridge links C79 with C190. S132 carries the phosphoserine modification. Position 199 (E199) interacts with Zn(2+). An intrachain disulfide couples C207 to C215.

The protein belongs to the somatotropin/prolactin family.

The protein resides in the secreted. In terms of biological role, plays an important role in growth control. Its major role in stimulating body growth is to stimulate the liver and other tissues to secrete IGF1. It stimulates both the differentiation and proliferation of myoblasts. It also stimulates amino acid uptake and protein synthesis in muscle and other tissues. The chain is Somatotropin (GH1) from Bos mutus grunniens (Wild yak).